A 263-amino-acid chain; its full sequence is Probable ABC transporter permease protein slr1045 (263 aa).

The next 7 membrane-spanning stretches (helical) occupy residues 12 to 32, 52 to 72, 97 to 117, 140 to 162, 167 to 186, 192 to 212, and 234 to 254; these read LWFQRLVAAFFLTGQVFLHIL, SMAIALITAGFVGMVFTIQVA, APVLTAVVIAGRVGSAFAAEI, LVVPRVIACGLMLPILTGLSLFV, GLVISSSLYAINPTIFLNSV, LWDVFACLFKSLVFGVIIAII, and AVVTSLLAIFISNFFLSWLMF.

It belongs to the MlaE permease family.

Its subcellular location is the cell membrane. Could be part of an ABC transporter complex. The chain is Probable ABC transporter permease protein slr1045 from Synechocystis sp. (strain ATCC 27184 / PCC 6803 / Kazusa).